The chain runs to 222 residues: Putative germin-like protein subfamily 1 member 9 (222 aa).

Residues 1–22 (MKSFSFLAVLSILAITLSLSKA) form the signal peptide. Cys-32 and Cys-49 are disulfide-bonded. The Cupin type-1 domain occupies 63–213 (TGLHEARPPN…AFQVDPKIVM (151 aa)). N-linked (GlcNAc...) asparagine glycosylation is present at Asn-78. The Mn(2+) site is built by His-111, His-113, Glu-118, and His-159.

Belongs to the germin family. As to quaternary structure, oligomer (believed to be a pentamer but probably hexamer).

It localises to the secreted. Its subcellular location is the extracellular space. It is found in the apoplast. May play a role in plant defense. Probably has no oxalate oxidase activity even if the active site is conserved. The protein is Putative germin-like protein subfamily 1 member 9 of Arabidopsis thaliana (Mouse-ear cress).